The primary structure comprises 451 residues: Phosphoglucosamine mutase (451 aa).

Catalysis depends on Ser-101, which acts as the Phosphoserine intermediate. Mg(2+) is bound by residues Ser-101, Asp-241, Asp-243, and Asp-245. Ser-101 is subject to Phosphoserine.

It belongs to the phosphohexose mutase family. Requires Mg(2+) as cofactor. In terms of processing, activated by phosphorylation.

It catalyses the reaction alpha-D-glucosamine 1-phosphate = D-glucosamine 6-phosphate. Functionally, catalyzes the conversion of glucosamine-6-phosphate to glucosamine-1-phosphate. The chain is Phosphoglucosamine mutase from Exiguobacterium sibiricum (strain DSM 17290 / CCUG 55495 / CIP 109462 / JCM 13490 / 255-15).